Consider the following 955-residue polypeptide: RNA polymerase-associated protein RapA (955 aa).

In terms of domain architecture, Helicase ATP-binding spans 163 to 333 (EVGHRYAPRV…FARLRLLDPE (171 aa)). 176-183 (DEVGLGKT) contributes to the ATP binding site. Positions 279 to 282 (DEAH) match the DEAH box motif. Residues 478-642 (RVEWLLELLL…AVRDELFELL (165 aa)) form the Helicase C-terminal domain.

It belongs to the SNF2/RAD54 helicase family. RapA subfamily. As to quaternary structure, interacts with the RNAP. Has a higher affinity for the core RNAP than for the holoenzyme. Its ATPase activity is stimulated by binding to RNAP.

Transcription regulator that activates transcription by stimulating RNA polymerase (RNAP) recycling in case of stress conditions such as supercoiled DNA or high salt concentrations. Probably acts by releasing the RNAP, when it is trapped or immobilized on tightly supercoiled DNA. Does not activate transcription on linear DNA. Probably not involved in DNA repair. This is RNA polymerase-associated protein RapA from Aeromonas hydrophila subsp. hydrophila (strain ATCC 7966 / DSM 30187 / BCRC 13018 / CCUG 14551 / JCM 1027 / KCTC 2358 / NCIMB 9240 / NCTC 8049).